The chain runs to 275 residues: Phosphonoacetaldehyde hydrolase (275 aa).

The Nucleophile role is filled by Asp15. The Mg(2+) site is built by Asp15 and Ala17. The active-site Schiff-base intermediate with substrate is the Lys56. Residue Asp189 participates in Mg(2+) binding.

Belongs to the HAD-like hydrolase superfamily. PhnX family. In terms of assembly, homodimer. The cofactor is Mg(2+).

It catalyses the reaction phosphonoacetaldehyde + H2O = acetaldehyde + phosphate + H(+). In terms of biological role, involved in phosphonate degradation. This is Phosphonoacetaldehyde hydrolase from Pseudomonas fluorescens (strain Pf0-1).